The sequence spans 443 residues: Protein FAM83A (443 aa).

The tract at residues 311-403 (DSGVSVMTDS…YYQRNYAPDS (93 aa)) is disordered. Polar residues predominate over residues 315 to 326 (SVMTDSTPESVN). Low complexity-rich tracts occupy residues 327 to 344 (TTSE…SNDS) and 388 to 399 (SNYQPNYYQRNY).

Belongs to the FAM83 family.

The protein resides in the cytoplasm. Its function is as follows. May function in the epidermal growth factor receptor/EGFR signaling pathway. The sequence is that of Protein FAM83A from Xenopus laevis (African clawed frog).